Consider the following 640-residue polypeptide: uncharacterized protein (640 aa).

The region spanning 184–328 is the TIR domain; the sequence is VKRDTIFIIK…KVQRSIDTMI (145 aa). A disordered region spans residues 613–640; the sequence is LPNDLDDEDEELDDSTLGRPDSDEEGGE. Residues 616–626 are compositionally biased toward acidic residues; the sequence is DLDDEDEELDD.

This is an uncharacterized protein from Sinorhizobium fredii (strain NBRC 101917 / NGR234).